We begin with the raw amino-acid sequence, 354 residues long: S-adenosylmethionine:tRNA ribosyltransferase-isomerase (354 aa).

This sequence belongs to the QueA family. Monomer.

It is found in the cytoplasm. It carries out the reaction 7-aminomethyl-7-carbaguanosine(34) in tRNA + S-adenosyl-L-methionine = epoxyqueuosine(34) in tRNA + adenine + L-methionine + 2 H(+). The protein operates within tRNA modification; tRNA-queuosine biosynthesis. Transfers and isomerizes the ribose moiety from AdoMet to the 7-aminomethyl group of 7-deazaguanine (preQ1-tRNA) to give epoxyqueuosine (oQ-tRNA). This Salmonella newport (strain SL254) protein is S-adenosylmethionine:tRNA ribosyltransferase-isomerase.